Reading from the N-terminus, the 519-residue chain is Cytochrome P450 52-E3 (519 aa).

The helical transmembrane segment at 10–30 (VLGGISVSFLLAYQAIYFYFI) threads the bilayer. Position 461 (cysteine 461) interacts with heme.

Belongs to the cytochrome P450 family. Heme serves as cofactor.

It is found in the membrane. The enzyme catalyses an omega-methyl-long-chain fatty acid + reduced [NADPH--hemoprotein reductase] + O2 = an omega-hydroxy-long-chain fatty acid + oxidized [NADPH--hemoprotein reductase] + H2O + H(+). The catalysed reaction is (9Z)-octadecenoate + reduced [NADPH--hemoprotein reductase] + O2 = 18-hydroxy-(9Z)-octadecenoate + oxidized [NADPH--hemoprotein reductase] + H2O + H(+). It catalyses the reaction hexadecanoate + reduced [NADPH--hemoprotein reductase] + O2 = 16-hydroxyhexadecanoate + oxidized [NADPH--hemoprotein reductase] + H2O + H(+). It carries out the reaction (9Z)-hexadecenoate + reduced [NADPH--hemoprotein reductase] + O2 = (9Z)-16-hydroxyhexadec-9-enoate + oxidized [NADPH--hemoprotein reductase] + H2O + H(+). Functionally, catalyzes the terminal (at the omega-position) hydroxylation of a fatty acid. Probably involved in alkane metabolism. Has minor activity toward myristic acid, palmitic acid, palmitoleic acid and oleic acid. In Starmerella bombicola (Yeast), this protein is Cytochrome P450 52-E3.